A 255-amino-acid chain; its full sequence is Diphthine synthase (255 aa).

S-adenosyl-L-methionine is bound by residues L9, D85, V88, 113–114 (SI), L164, A207, and H232.

Belongs to the diphthine synthase family. As to quaternary structure, homodimer.

The enzyme catalyses 2-[(3S)-amino-3-carboxypropyl]-L-histidyl-[translation elongation factor 2] + 3 S-adenosyl-L-methionine = diphthine-[translation elongation factor 2] + 3 S-adenosyl-L-homocysteine + 3 H(+). It functions in the pathway protein modification; peptidyl-diphthamide biosynthesis. S-adenosyl-L-methionine-dependent methyltransferase that catalyzes the trimethylation of the amino group of the modified target histidine residue in translation elongation factor 2 (EF-2), to form an intermediate called diphthine. The three successive methylation reactions represent the second step of diphthamide biosynthesis. The polypeptide is Diphthine synthase (Methanococcus maripaludis (strain C7 / ATCC BAA-1331)).